A 697-amino-acid chain; its full sequence is Disintegrin and metalloproteinase domain-containing protein 26A (697 aa).

An N-terminal signal peptide occupies residues 1–22 (MFLKFCLWTMFFFSAWSPIGHA). Positions 23 to 187 (KYSSLLEVVT…NAPTLLQIPY (165 aa)) are excised as a propeptide. An N-linked (GlcNAc...) asparagine glycan is attached at asparagine 127. Residues 159–166 (MRCGLSEE) carry the Cysteine switch motif. Cysteine 161 lines the Zn(2+) pocket. Over 188–671 (ENWWTHHRFI…PPLPLSHSKW (484 aa)) the chain is Extracellular. The 191-residue stretch at 195 to 385 (RFIEYFVVLD…TKRSCLYDIP (191 aa)) folds into the Peptidase M12B domain. Asparagine 214 carries N-linked (GlcNAc...) asparagine glycosylation. 3 disulfides stabilise this stretch: cysteine 305–cysteine 380, cysteine 344–cysteine 366, and cysteine 346–cysteine 351. A Zn(2+)-binding site is contributed by histidine 329. Glutamate 330 is an active-site residue. Residues histidine 333 and histidine 339 each contribute to the Zn(2+) site. Residues asparagine 365, asparagine 391, asparagine 464, asparagine 506, asparagine 531, and asparagine 573 are each glycosylated (N-linked (GlcNAc...) asparagine). The region spanning 392–478 (LTVCGNKVVE…ECPGDVYKAD (87 aa)) is the Disintegrin domain. An intrachain disulfide couples cysteine 450 to cysteine 470. Residues 616 to 649 (LVSNCSPQLYHMQGICNNKQHCHCGVTWKPPDCQ) form the EGF-like domain. Intrachain disulfides connect cysteine 620-cysteine 631 and cysteine 639-cysteine 648. A helical transmembrane segment spans residues 672-692 (IVYILIVLDVCIVIIIYLFSF). At 693 to 697 (YKLSK) the chain is on the cytoplasmic side.

Zn(2+) is required as a cofactor. Expressed in sperm (at protein level). Expressed specifically in testis.

The protein resides in the membrane. Its function is as follows. Sperm surface membrane protein that may be involved in spermatogenesis and fertilization. This Mus musculus (Mouse) protein is Disintegrin and metalloproteinase domain-containing protein 26A.